The primary structure comprises 400 residues: Probable splicing factor YJU2B (400 aa).

Residues Met-1–Tyr-26 are disordered. A Phosphoserine modification is found at Ser-40. Positions Leu-182–Ala-214 form a coiled coil. Residues Trp-255 to Glu-400 are disordered. Polar residues predominate over residues Arg-283–Val-292. Ser-310 is modified (phosphoserine). Residues Glu-327 to Ser-341 show a composition bias toward polar residues. A compositionally biased stretch (pro residues) spans Pro-364–Thr-380.

The protein belongs to the CWC16 family.

Its subcellular location is the nucleus. May be involved in mRNA splicing. The sequence is that of Probable splicing factor YJU2B (YJU2B) from Bos taurus (Bovine).